Here is a 781-residue protein sequence, read N- to C-terminus: Pyrin (781 aa).

In terms of domain architecture, Pyrin spans 1–92; the sequence is MAKTPSDHLL…AEELHRAAIQ (92 aa). Polar residues predominate over residues 93–111; sequence EYSTQENGTDDSAASSSLG. Residues 93 to 226 form a disordered region; sequence EYSTQENGTD…AGGAPGQKEC (134 aa). Residues 113 to 126 are compositionally biased toward basic and acidic residues; it reads NKPRSLKTPDHPEG. Over residues 153–163 the composition is skewed to basic residues; that stretch reads LSRKPLSKRRE. Phosphoserine is present on Ser242. Positions 266–280 are interaction with RELA; that stretch reads KTAANLDSATEPRAR. Disordered regions lie at residues 270–322 and 336–373; these read NLDS…EGDP and EAVS…QPLP. The segment at 370 to 412 adopts a B box-type zinc-finger fold; sequence QPLPQCKRHLKQVQLLFCEDHDEPICLICSLSQEHQGHRVRPI. Residues 413 to 442 are a coiled coil; sequence EEVALEHKKKIQKQLEHLKKLRKSGEEQRS. A Nuclear localization signal motif is present at residues 420–437; that stretch reads KKKIQKQLEHLKKLRKSG. A required for homotrimerization and induction of pyroptosomes region spans residues 420-582; sequence KKKIQKQLEH…YFSETLRSEM (163 aa). Residues 580 to 775 enclose the B30.2/SPRY domain; that stretch reads SEMEMFNVPE…NTAPLTICPV (196 aa).

As to quaternary structure, homotrimer. Interacts (via the B box-type zinc finger) with PSTPIP1. Interacts (via the B30.2/SPRY domain) with several components of the inflammasome complex, including CASP1 p20 and p10 subunits, CASP5, PYCARD, NLRP1, NLRP2 and NLRP3, as well as with unprocessed IL1B; this interaction may lead to autophagic degradation of these proteins. Component of the AIM2 PANoptosome complex, a multiprotein complex that drives inflammatory cell death (PANoptosis). Interacts with NFKBIA and RELA. Interacts weakly with VASP and ACTR3. Interacts with active ULK1 (phosphorylated on 'Ser-317') and BECN1 simultaneously. Also interacts with ATG16L1 (via WD repeats), and with ATG8 family members, including GABARAP, GABARAPL1 and, to a lesser extent, GABARAPL2, MAP1LC3A/LC3A and MAP1LC3C/LC3C. Interacts with TRIM21. Interacts with YWHAB, YWHAE, YWHAG, YWHAH, YWHAQ and YWHAZ; the interaction is required for the down-regulation of pyrin pro-inflammatory activity. Cleaved by CASP1. The N-terminal cleavage product localizes to the nucleus as a filamentous network and to the cytoplasm, interacts more strongly with RELA and NFKBIA than the full-length protein, enhances the nuclear localization of RELA and induces NFKBIA proteolysis. The C-terminal cleavage product localizes to the cytoplasm. Post-translationally, phosphorylation at Ser-242 is required for the interaction with 14-3-3 proteins and down-regulation of pyrin pro-inflammatory activity. In terms of processing, degraded along with the delivery of its substrates to autolysosomal compartments (at protein level). As to expression, expressed in peripheral blood leukocytes, particularly in mature granulocytes and to a lesser extent in monocytes but not in lymphocytes. Detected in spleen, lung and muscle, probably as a result of leukocyte infiltration in these tissues. Not expressed in thymus, prostate, testis, ovary, small intestine, colon, heart, brain, placenta, liver, kidney, pancreas. Expression detected in several myeloid leukemic, colon cancer, and prostate cancer cell lines.

The protein localises to the cytoplasm. It is found in the cytoskeleton. The protein resides in the cell projection. Its subcellular location is the ruffle. It localises to the lamellipodium. The protein localises to the nucleus. It is found in the cytoplasmic vesicle. The protein resides in the autophagosome. Functionally, involved in the regulation of innate immunity and the inflammatory response in response to IFNG/IFN-gamma. Organizes autophagic machinery by serving as a platform for the assembly of ULK1, Beclin 1/BECN1, ATG16L1, and ATG8 family members and recognizes specific autophagy targets, thus coordinating target recognition with assembly of the autophagic apparatus and initiation of autophagy. Acts as an autophagy receptor for the degradation of several inflammasome components, including CASP1, NLRP1 and NLRP3, hence preventing excessive IL1B- and IL18-mediated inflammation. However, it can also have a positive effect in the inflammatory pathway, acting as an innate immune sensor that triggers PYCARD/ASC specks formation, caspase-1 activation, and IL1B and IL18 production. Together with AIM2, also acts as a mediator of pyroptosis, necroptosis and apoptosis (PANoptosis), an integral part of host defense against pathogens, in response to bacterial infection. It is required for PSTPIP1-induced PYCARD/ASC oligomerization and inflammasome formation. Recruits PSTPIP1 to inflammasomes, and is required for PSTPIP1 oligomerization. The polypeptide is Pyrin (Homo sapiens (Human)).